Consider the following 79-residue polypeptide: Acyl carrier protein (79 aa).

The 76-residue stretch at 2 to 77 (SSIEDRVKKI…QAVDYIKKHL (76 aa)) folds into the Carrier domain. Position 37 is an O-(pantetheine 4'-phosphoryl)serine (serine 37).

The protein belongs to the acyl carrier protein (ACP) family. 4'-phosphopantetheine is transferred from CoA to a specific serine of apo-ACP by AcpS. This modification is essential for activity because fatty acids are bound in thioester linkage to the sulfhydryl of the prosthetic group.

It localises to the cytoplasm. It participates in lipid metabolism; fatty acid biosynthesis. Functionally, carrier of the growing fatty acid chain in fatty acid biosynthesis. This chain is Acyl carrier protein, found in Halorhodospira halophila (strain DSM 244 / SL1) (Ectothiorhodospira halophila (strain DSM 244 / SL1)).